The chain runs to 582 residues: Membrane protein insertase YidC (582 aa).

The next 4 membrane-spanning stretches (helical) occupy residues 4–24 (NTVL…YIQQ), 376–396 (IIPN…IIFF), 446–466 (ASGC…FGLF), and 542–562 (FMPL…LLFW).

Belongs to the OXA1/ALB3/YidC family. Type 1 subfamily. Interacts with the Sec translocase complex via SecD. Specifically interacts with transmembrane segments of nascent integral membrane proteins during membrane integration.

It localises to the cell inner membrane. Its function is as follows. Required for the insertion and/or proper folding and/or complex formation of integral membrane proteins into the membrane. Involved in integration of membrane proteins that insert both dependently and independently of the Sec translocase complex, as well as at least some lipoproteins. Aids folding of multispanning membrane proteins. This Treponema denticola (strain ATCC 35405 / DSM 14222 / CIP 103919 / JCM 8153 / KCTC 15104) protein is Membrane protein insertase YidC.